A 100-amino-acid polypeptide reads, in one-letter code: Integration host factor subunit alpha (100 aa).

The interval 50-70 is disordered; sequence GNFQLRDKPQRPGRNPKTGEE.

It belongs to the bacterial histone-like protein family. In terms of assembly, heterodimer of an alpha and a beta chain.

Functionally, this protein is one of the two subunits of integration host factor, a specific DNA-binding protein that functions in genetic recombination as well as in transcriptional and translational control. The polypeptide is Integration host factor subunit alpha (Chromobacterium violaceum (strain ATCC 12472 / DSM 30191 / JCM 1249 / CCUG 213 / NBRC 12614 / NCIMB 9131 / NCTC 9757 / MK)).